We begin with the raw amino-acid sequence, 158 residues long: Transcription elongation factor GreA (158 aa).

Positions 4–75 form a coiled coil; it reads QKQYPMTQEG…QRVENMLRNA (72 aa).

This sequence belongs to the GreA/GreB family.

Its function is as follows. Necessary for efficient RNA polymerase transcription elongation past template-encoded arresting sites. The arresting sites in DNA have the property of trapping a certain fraction of elongating RNA polymerases that pass through, resulting in locked ternary complexes. Cleavage of the nascent transcript by cleavage factors such as GreA or GreB allows the resumption of elongation from the new 3'terminus. GreA releases sequences of 2 to 3 nucleotides. The protein is Transcription elongation factor GreA of Staphylococcus saprophyticus subsp. saprophyticus (strain ATCC 15305 / DSM 20229 / NCIMB 8711 / NCTC 7292 / S-41).